A 479-amino-acid polypeptide reads, in one-letter code: Glycogen synthase (479 aa).

ADP-alpha-D-glucose is bound at residue Lys-15.

The protein belongs to the glycosyltransferase 1 family. Bacterial/plant glycogen synthase subfamily.

It catalyses the reaction [(1-&gt;4)-alpha-D-glucosyl](n) + ADP-alpha-D-glucose = [(1-&gt;4)-alpha-D-glucosyl](n+1) + ADP + H(+). The protein operates within glycan biosynthesis; glycogen biosynthesis. Synthesizes alpha-1,4-glucan chains using ADP-glucose. The polypeptide is Glycogen synthase (Histophilus somni (strain 129Pt) (Haemophilus somnus)).